A 451-amino-acid chain; its full sequence is MNTNKILETIKMIEEEKLDIRTITMGISLLDCIDPDGEKARIKIYDKITKSAEHLVEVGRQIESEFGIPIVNKRVSVTPISIIAGATNEESYVKFAQTLDKAADTLGIDFLGGFSALVQKGCTKGDKILINSIPEALAITQKVCASVNVGCTKSGINMNAVRDMGEIIKKTAELTKDKKGFGCAKLVVFANAVEDNPFMAGAFHGVGEAEKIINVGVSGPGVVKRALEKVRGQSFDVVAETIKKTAFKVTRMGELVANEASRRLGVPFGIVDLSLAPTPAVGDSVAEILEEIGLETVGTHGTIAALAMLNDAVKKGGVMACSHVGGLSGAFIPVSEDAGMIEAVIKGSLNLEKLEGMTCVCSVGLDMIAIPGNTPASTISAMIADEAAIGVINNKTTAVRIIPAPGCSVGDMVEFGGLLGRAPVMKVNENSSELFAQRGGRIPAPIHSFKN.

It belongs to the UPF0210 family. In terms of assembly, homodimer.

In Clostridium botulinum (strain Eklund 17B / Type B), this protein is UPF0210 protein CLL_A1718.